A 276-amino-acid chain; its full sequence is Type II pantothenate kinase (276 aa).

8-15 provides a ligand contact to ATP; sequence DAGGTLTK. Catalysis depends on Glu-76, which acts as the Proton acceptor. ATP-binding positions include Thr-105, 127 to 131, Phe-143, and Ser-230; that span reads GGTIM.

The protein belongs to the type II pantothenate kinase family. In terms of assembly, homodimer.

The protein resides in the cytoplasm. The enzyme catalyses (R)-pantothenate + ATP = (R)-4'-phosphopantothenate + ADP + H(+). Its pathway is cofactor biosynthesis; coenzyme A biosynthesis; CoA from (R)-pantothenate: step 1/5. Catalyzes the phosphorylation of pantothenate (Pan), the first step in CoA biosynthesis. The sequence is that of Type II pantothenate kinase from Bacillus thuringiensis subsp. konkukian (strain 97-27).